We begin with the raw amino-acid sequence, 172 residues long: Biogenesis of lysosome-related organelles complex 1 subunit 6 (172 aa).

Disordered regions lie at residues 1-36 (MSVPGPPSPDGVLAGPPEGLEAGDLTPGLSDTSPDE) and 135-172 (RALKLQQKRQKEELEREQQREKEFEREKQLTAKPAKRT). A coiled-coil region spans residues 125–167 (LHEKTSKLKKRALKLQQKRQKEELEREQQREKEFEREKQLTAK). A compositionally biased stretch (basic and acidic residues) spans 143-164 (RQKEELEREQQREKEFEREKQL).

Belongs to the BLOC1S6 family. As to quaternary structure, homodimer. Octamer composed of one copy each BLOC1S1, BLOC1S2, BLOC1S3, BLOC1S4, BLOC1S5, BLOC1S6, DTNBP1/BLOC1S7 and SNAPIN/BLOC1S8. The BLOC-1 complex associates with the AP-3 protein complex and membrane protein cargos. Interacts with BLOC1S4, BLOC1S5, DTNBP1/BLOC1S7, F-actin. Component of the biogenesis of lysosome-related organelles complex 1 (BLOC-1) composed of BLOC1S1, BLOC1S2, BLOC1S3, BLOC1S4, BLOC1S5, BLOC1S6, DTNBP1/BLOC1S7 and SNAPIN/BLOC1S8. Interacts with SNAP25, SNAP47 and STX12.

It is found in the cytoplasm. The protein localises to the membrane. Component of the BLOC-1 complex, a complex that is required for normal biogenesis of lysosome-related organelles (LRO), such as platelet dense granules and melanosomes. In concert with the AP-3 complex, the BLOC-1 complex is required to target membrane protein cargos into vesicles assembled at cell bodies for delivery into neurites and nerve terminals. The BLOC-1 complex, in association with SNARE proteins, is also proposed to be involved in neurite extension. May play a role in intracellular vesicle trafficking, particularly in the vesicle-docking and fusion process. This Bos taurus (Bovine) protein is Biogenesis of lysosome-related organelles complex 1 subunit 6 (BLOC1S6).